A 594-amino-acid chain; its full sequence is UvrABC system protein C (594 aa).

Positions 14–91 (DSPGCYLHKD…IQENMPKYNI (78 aa)) constitute a GIY-YIG domain. The UVR domain maps to 196–231 (DKIIDDLRSKMLEASNKQEFERAAEYRDLISGIATM).

This sequence belongs to the UvrC family. Interacts with UvrB in an incision complex.

The protein resides in the cytoplasm. In terms of biological role, the UvrABC repair system catalyzes the recognition and processing of DNA lesions. UvrC both incises the 5' and 3' sides of the lesion. The N-terminal half is responsible for the 3' incision and the C-terminal half is responsible for the 5' incision. The chain is UvrABC system protein C from Streptococcus equi subsp. zooepidemicus (strain MGCS10565).